The following is a 489-amino-acid chain: Rhamnulokinase (489 aa).

13–17 (ASSGR) contributes to the ATP binding site. An intrachain disulfide couples C68 to C222. Substrate contacts are provided by residues G83 and 236-238 (HDT). D237 serves as the catalytic Proton acceptor. T259 contacts ATP. N296 is a substrate binding site. Q304 is a binding site for ATP. A disulfide bridge connects residues C353 and C370. Residue G402 participates in ATP binding. C413 and C417 are joined by a disulfide.

Belongs to the rhamnulokinase family. The cofactor is Mg(2+).

The enzyme catalyses L-rhamnulose + ATP = L-rhamnulose 1-phosphate + ADP + H(+). The protein operates within carbohydrate degradation; L-rhamnose degradation; glycerone phosphate from L-rhamnose: step 2/3. Functionally, involved in the catabolism of L-rhamnose (6-deoxy-L-mannose). Catalyzes the transfer of the gamma-phosphate group from ATP to the 1-hydroxyl group of L-rhamnulose to yield L-rhamnulose 1-phosphate. The polypeptide is Rhamnulokinase (Salmonella typhi).